The following is a 191-amino-acid chain: dTTP/UTP pyrophosphatase (191 aa).

Asp-70 (proton acceptor) is an active-site residue.

The protein belongs to the Maf family. YhdE subfamily. It depends on a divalent metal cation as a cofactor.

The protein resides in the cytoplasm. It carries out the reaction dTTP + H2O = dTMP + diphosphate + H(+). It catalyses the reaction UTP + H2O = UMP + diphosphate + H(+). Nucleoside triphosphate pyrophosphatase that hydrolyzes dTTP and UTP. May have a dual role in cell division arrest and in preventing the incorporation of modified nucleotides into cellular nucleic acids. This Clostridium novyi (strain NT) protein is dTTP/UTP pyrophosphatase.